The following is a 642-amino-acid chain: Threonine--tRNA ligase (642 aa).

A TGS domain is found at 1–61 (MPIITLPDGS…EEDASLEIIT (61 aa)). Residues 244–535 (DHRKIGKQLD…LIEEYAGFFP (292 aa)) are catalytic. Zn(2+)-binding residues include Cys335, His386, and His512.

The protein belongs to the class-II aminoacyl-tRNA synthetase family. In terms of assembly, homodimer. The cofactor is Zn(2+).

Its subcellular location is the cytoplasm. It carries out the reaction tRNA(Thr) + L-threonine + ATP = L-threonyl-tRNA(Thr) + AMP + diphosphate + H(+). Functionally, catalyzes the attachment of threonine to tRNA(Thr) in a two-step reaction: L-threonine is first activated by ATP to form Thr-AMP and then transferred to the acceptor end of tRNA(Thr). Also edits incorrectly charged L-seryl-tRNA(Thr). This is Threonine--tRNA ligase from Vibrio parahaemolyticus serotype O3:K6 (strain RIMD 2210633).